The following is a 430-amino-acid chain: Enolase (430 aa).

Position 167 (Gln-167) interacts with (2R)-2-phosphoglycerate. Glu-209 serves as the catalytic Proton donor. The Mg(2+) site is built by Asp-246, Glu-287, and Asp-314. Residues Lys-339, Arg-368, Ser-369, and Lys-390 each contribute to the (2R)-2-phosphoglycerate site. Catalysis depends on Lys-339, which acts as the Proton acceptor.

This sequence belongs to the enolase family. The cofactor is Mg(2+).

It is found in the cytoplasm. The protein resides in the secreted. Its subcellular location is the cell surface. It carries out the reaction (2R)-2-phosphoglycerate = phosphoenolpyruvate + H2O. Its pathway is carbohydrate degradation; glycolysis; pyruvate from D-glyceraldehyde 3-phosphate: step 4/5. In terms of biological role, catalyzes the reversible conversion of 2-phosphoglycerate (2-PG) into phosphoenolpyruvate (PEP). It is essential for the degradation of carbohydrates via glycolysis. The sequence is that of Enolase from Prochlorococcus marinus (strain AS9601).